The chain runs to 226 residues: Urease accessory protein UreF (226 aa).

The protein belongs to the UreF family. UreD, UreF and UreG form a complex that acts as a GTP-hydrolysis-dependent molecular chaperone, activating the urease apoprotein by helping to assemble the nickel containing metallocenter of UreC. The UreE protein probably delivers the nickel.

The protein resides in the cytoplasm. Its function is as follows. Required for maturation of urease via the functional incorporation of the urease nickel metallocenter. This Burkholderia vietnamiensis (strain G4 / LMG 22486) (Burkholderia cepacia (strain R1808)) protein is Urease accessory protein UreF.